Consider the following 122-residue polypeptide: MSSPEIASLSWGQMKVQGSTKIYKDCKVWPGGSRDWDWRETGTEHSPGVQPADVEEVVEKGVQILVIGRGMSEALKVPPSTVEYLKKKGIDVRVLQTEQAVKEYNALATQGIRVGGVFHSTC.

An MTH138-like domain region spans residues I6 to C122.

Belongs to the AAMDC family.

It localises to the cytoplasm. May play a role in preadipocyte differentiation and adipogenesis. This is Mth938 domain-containing protein (AAMDC) from Bos taurus (Bovine).